A 773-amino-acid polypeptide reads, in one-letter code: MYRALWLSPLRFIVSSSSSKLTPYVSRGRGLSGIDNGAGCSCSRSVTTMIGNEFIRCQDESKILQLQIVDALRSGERQGASALLFKLIQGNYSLSADDFHDILYYCARSPDPVFVMETYSVMCKKEISLDSRSLLFIVKSLCNGGHLDKASEFIHAVREDDRISPLLPIYNFFLGACARTRSVYHASKCLELMDQRRVGKNGITYVALLKLAVFQRNLSTVNDIWKHYVNHYNLDILSLRRFIWSFTRLGDLKSAYELLQHMVYLALRGEFFVKSNRGKLHSTRLYIPVPSKDETGSEKFAFGVTDRIVDCNSSSKVALPKGHNKILAIRVLRWSFNDVIHACGQSKNSELAEQLMLQLKVMQQQNLKPYDSTLATVAAYCSKALQVDLAEHLLDQISECSYSYPFNNLLAAYDSLDQPERAVRVLARMKELKLRPDMRTYELLFSLFGNVNAPYEEGNMLSQVDCCKRINAIEMDMMRNGFQHSPISRLNVLRALGAEGMVNEMIRHLQKAENLSAHSNMYLGTPTYNIVLHSLLEANETDMVINIFKRMKSCGCPADVATYNIMIDCCSLIHSYKSACALVSMMIRDGFSPKAVTFTALMKILLNDANFEEALNLLDQAALEEIHLDVLSYNTILRKAFEKGMIDVIEYIVEQMHREKVNPDPTTCHYVFSCYVEKGYHATAIEALNVLSLRMLNEEDKESLQDKKIELEENFVMSEDPEAETKIIELFRKSEEHLAAALLNLRWCAMLGGRIIWSEDQSPWARALSNKYG.

PPR repeat units follow at residues 130–165, 166–200, 201–231, 235–269, 332–369, 370–400, 402–436, 524–558, 559–593, 594–628, and 629–663; these read DSRSLLFIVKSLCNGGHLDKASEFIHAVREDDRISP, LLPIYNFFLGACARTRSVYHASKCLELMDQRRVGK, NGITYVALLKLAVFQRNLSTVNDIWKHYVNH, DILSLRRFIWSFTRLGDLKSAYELLQHMVYLALRG, LRWSFNDVIHACGQSKNSELAEQLMLQLKVMQQQNLKP, YDSTLATVAAYCSKALQVDLAEHLLDQISEC, YSYPFNNLLAAYDSLDQPERAVRVLARMKELKLRP, GTPTYNIVLHSLLEANETDMVINIFKRMKSCGCPA, DVATYNIMIDCCSLIHSYKSACALVSMMIRDGFSP, KAVTFTALMKILLNDANFEEALNLLDQAALEEIHL, and DVLSYNTILRKAFEKGMIDVIEYIVEQMHREKVNP.

This sequence belongs to the PPR family. P subfamily.

This is Pentatricopeptide repeat-containing protein At1g76280 from Arabidopsis thaliana (Mouse-ear cress).